A 110-amino-acid polypeptide reads, in one-letter code: Cytochrome c oxidase subunit 4B (110 aa).

The next 3 helical transmembrane spans lie at 27-47, 50-70, and 88-108; these read YQVL…LTVA, GVGS…QVIF, and LFLY…VTII.

It belongs to the cytochrome c oxidase bacterial subunit 4 family.

Its subcellular location is the cell membrane. The catalysed reaction is 4 Fe(II)-[cytochrome c] + O2 + 8 H(+)(in) = 4 Fe(III)-[cytochrome c] + 2 H2O + 4 H(+)(out). This Bacillus subtilis (strain 168) protein is Cytochrome c oxidase subunit 4B (ctaF).